The following is a 462-amino-acid chain: Cysteine--tRNA ligase (462 aa).

Cysteine 29 lines the Zn(2+) pocket. The short motif at 31–41 is the 'HIGH' region element; the sequence is PTVYDHAHIGN. Cysteine 214, histidine 239, and glutamate 243 together coordinate Zn(2+). The 'KMSKS' region signature appears at 272-276; the sequence is KMSKS. Lysine 275 is an ATP binding site.

Belongs to the class-I aminoacyl-tRNA synthetase family. Monomer. Zn(2+) is required as a cofactor.

It localises to the cytoplasm. The catalysed reaction is tRNA(Cys) + L-cysteine + ATP = L-cysteinyl-tRNA(Cys) + AMP + diphosphate. In Azorhizobium caulinodans (strain ATCC 43989 / DSM 5975 / JCM 20966 / LMG 6465 / NBRC 14845 / NCIMB 13405 / ORS 571), this protein is Cysteine--tRNA ligase.